Consider the following 1649-residue polypeptide: DNA-directed RNA polymerase subunit beta' (1649 aa).

4 residues coordinate Zn(2+): cysteine 63, cysteine 65, cysteine 78, and cysteine 81. Residues aspartate 747, aspartate 749, and aspartate 751 each contribute to the Mg(2+) site. 4 residues coordinate Zn(2+): cysteine 1078, cysteine 1269, cysteine 1276, and cysteine 1279.

This sequence belongs to the RNA polymerase beta' chain family. In terms of assembly, the RNAP catalytic core consists of 2 alpha, 1 beta, 1 beta' and 1 omega subunit. When a sigma factor is associated with the core the holoenzyme is formed, which can initiate transcription. The cofactor is Mg(2+). Zn(2+) is required as a cofactor.

It carries out the reaction RNA(n) + a ribonucleoside 5'-triphosphate = RNA(n+1) + diphosphate. DNA-dependent RNA polymerase catalyzes the transcription of DNA into RNA using the four ribonucleoside triphosphates as substrates. In Thermosipho melanesiensis (strain DSM 12029 / CIP 104789 / BI429), this protein is DNA-directed RNA polymerase subunit beta'.